We begin with the raw amino-acid sequence, 911 residues long: Pesticidal crystal protein Cry1Af (911 aa).

This sequence belongs to the delta endotoxin family.

Functionally, promotes colloidosmotic lysis by binding to the midgut epithelial cells of both dipteran and lepidopteran larvae. In Bacillus thuringiensis, this protein is Pesticidal crystal protein Cry1Af (cry1Af).